The chain runs to 861 residues: Alpha-actinin A (861 aa).

The tract at residues 1–239 is actin-binding; sequence MSEEPTPVSG…VMTYVAQYYH (239 aa). Calponin-homology (CH) domains are found at residues 22–127 and 136–242; these read ITQK…LRFA and LSAK…HHFS. Spectrin repeat units follow at residues 240-365, 366-480, 481-601, and 602-714; these read HFSA…ALEK, AEQE…TGVK, SSAE…EERK, and VQLA…EQVV. 2 consecutive EF-hand domains span residues 729–764 and 765–800; these read EELS…IGDE and LTEE…SRKG. 10 residues coordinate Ca(2+): Asp-742, Asp-744, Asp-746, Lys-748, Glu-753, Asp-778, Asp-780, Asn-782, Thr-784, and Glu-789.

This sequence belongs to the alpha-actinin family. As to quaternary structure, homodimer; antiparallel.

It localises to the cytoplasm. The protein resides in the cell cortex. It is found in the contractile vacuole. The protein localises to the cytoplasmic vesicle. Its subcellular location is the phagosome. In terms of biological role, F-actin cross-linking protein which is thought to anchor actin to a variety of intracellular structures. This is a bundling protein. Increases the actin-stimulated ATPase activity of myosin. Involved in vegetative cell growth, phagocytosis, motility and development, probably through stabilization of the actin network in the cortical cytoskeleton. In Dictyostelium discoideum (Social amoeba), this protein is Alpha-actinin A (abpA).